The sequence spans 330 residues: Tryptophan--tRNA ligase (330 aa).

Residues 10-12 (QTT) and 18-19 (GN) each bind ATP. A 'HIGH' region motif is present at residues 11 to 19 (TTGALHLGN). Position 134 (D134) interacts with L-tryptophan. Residues 146–148 (GED), I186, and 195–199 (KMSKS) each bind ATP. The short motif at 195–199 (KMSKS) is the 'KMSKS' region element.

Belongs to the class-I aminoacyl-tRNA synthetase family. In terms of assembly, homodimer.

It localises to the cytoplasm. The enzyme catalyses tRNA(Trp) + L-tryptophan + ATP = L-tryptophyl-tRNA(Trp) + AMP + diphosphate + H(+). In terms of biological role, catalyzes the attachment of tryptophan to tRNA(Trp). This chain is Tryptophan--tRNA ligase, found in Rickettsia prowazekii (strain Madrid E).